We begin with the raw amino-acid sequence, 1397 residues long: Probable cyclin-dependent serine/threonine-protein kinase DDB_G0292550 (1397 aa).

Residues 4–287 form the Protein kinase domain; sequence FQIIELIGSG…TKEALNHPWF (284 aa). ATP contacts are provided by residues 10–18 and lysine 33; that span reads IGSGSYGKV. Residue aspartate 124 is the Proton acceptor of the active site. Disordered regions lie at residues 412-567, 671-728, 763-831, 845-949, 996-1101, 1115-1174, 1227-1324, and 1340-1397; these read NNNN…NNNN, PLSI…NNGF, NEMG…NGNN, NNNN…YANH, NGLA…NTHN, NNGF…NSPV, NSAS…SFGL, and KKKK…IVLD. Over residues 676–715 the composition is skewed to low complexity; that stretch reads SQHHNTSSSDTHNNNNNNYNNNNNNNNNINNNNINSIHNQ. Composition is skewed to low complexity over residues 845-941, 1012-1021, 1028-1101, and 1115-1155; these read NNNN…NGNG, NSNNNNSGNN, NTFN…NTHN, and NNGF…TKNN. The segment covering 1156 to 1171 has biased composition (polar residues); the sequence is TQFGPNILSSTQTSHN. 2 stretches are compositionally biased toward low complexity: residues 1253–1321 and 1354–1380; these read NNNN…NNNS and SSSQ…SQTQ.

This sequence belongs to the protein kinase superfamily. CMGC Ser/Thr protein kinase family. CDC2/CDKX subfamily.

It carries out the reaction L-seryl-[protein] + ATP = O-phospho-L-seryl-[protein] + ADP + H(+). It catalyses the reaction L-threonyl-[protein] + ATP = O-phospho-L-threonyl-[protein] + ADP + H(+). In Dictyostelium discoideum (Social amoeba), this protein is Probable cyclin-dependent serine/threonine-protein kinase DDB_G0292550.